We begin with the raw amino-acid sequence, 1470 residues long: Rap guanine nucleotide exchange factor (1470 aa).

Disordered stretches follow at residues 130-227 (PTEP…SYND) and 250-313 (HRRE…GGFM). Residues 173–183 (MPPPPVPPRPL) are compositionally biased toward pro residues. Composition is skewed to low complexity over residues 184-193 (RLPQTAAKGP) and 215-224 (TTSSSSSNTS). Residues 256–266 (NSVGGQAQNGI) are compositionally biased toward polar residues. The segment covering 275–292 (RSTASSTTTEGETASNEG) has biased composition (low complexity). Residue 347–463 (AFAALPMSIK…IEKDRDGLTG (117 aa)) participates in a nucleoside 3',5'-cyclic phosphate binding. One can recognise an N-terminal Ras-GEF domain in the interval 478-592 (CGQVLIKGKP…SLLNIACSVK (115 aa)). Positions 597–679 (QVILTRRKDD…LTLMLKNNVL (83 aa)) constitute a PDZ domain. Positions 782–869 (PEHVLKIYRN…SRYYLKNNSR (88 aa)) constitute a Ras-associating domain. In terms of domain architecture, Ras-GEF spans 894 to 1124 (NAQVVAAQLT…FENSNVATMR (231 aa)). Residues 1176–1189 (QTAHRGANSSSTAN) are compositionally biased toward polar residues. 4 disordered regions span residues 1176–1213 (QTAH…DQSS), 1253–1326 (KVKG…NIPP), 1347–1370 (VIPT…PASS), and 1422–1455 (ATLP…RMGT). Over residues 1198–1211 (PSSLSSQSAGSADQ) the composition is skewed to low complexity. 2 stretches are compositionally biased toward polar residues: residues 1260–1274 (QITS…SLQR) and 1282–1308 (RQAT…YQSD). Residues 1309–1321 (NGRRQRSGSEGRF) are compositionally biased toward basic and acidic residues. Positions 1349–1370 (PTHPHGHSPTSPRCRSRSPASS) are enriched in low complexity.

It belongs to the RAPGEF2 family. Expressed in hermaphrodite-specific neurons (HSNs), oviduct sheath cells and lateral seam cells.

In terms of biological role, acts as a guanine nucleotide exchange factor for small G protein GTPases like rap-1 and rap-2. Required in the hypodermis, especially in the seam cells, for proper formation of the cuticle. The polypeptide is Rap guanine nucleotide exchange factor (pxf-1) (Caenorhabditis elegans).